Reading from the N-terminus, the 622-residue chain is Probable potassium transport system protein Kup 1 (622 aa).

12 consecutive transmembrane segments (helical) span residues 11–31 (LTLG…LYAV), 50–70 (ILSI…VTLV), 101–121 (VLLL…VITP), 137–157 (PAFN…LFWV), 168–188 (FFGP…VAQI), 215–235 (FIIL…YADL), 247–267 (WFAV…ALLL), 285–305 (ALLP…QALI), 337–357 (IYLP…VMIF), 366–386 (AYGI…FFVI), 393–413 (PLWL…AFWA), and 419–439 (LFDG…LMIT).

Belongs to the HAK/KUP transporter (TC 2.A.72) family.

The protein resides in the cell inner membrane. It carries out the reaction K(+)(in) + H(+)(in) = K(+)(out) + H(+)(out). In terms of biological role, transport of potassium into the cell. Likely operates as a K(+):H(+) symporter. In Albidiferax ferrireducens (strain ATCC BAA-621 / DSM 15236 / T118) (Rhodoferax ferrireducens), this protein is Probable potassium transport system protein Kup 1.